The chain runs to 130 residues: Albumin-1 C (130 aa).

Residues 1–26 form the signal peptide; that stretch reads MASVKLASLIVLFATLGMFLTKNVGA. Intrachain disulfides connect cysteine 29/cysteine 46, cysteine 33/cysteine 48, and cysteine 41/cysteine 58. 2 propeptides span residues 64-69 and 123-130; these read VFLRTN and LLKSVSTA.

In terms of processing, the C-terminal glycine may be removed from PA1b. Major component of both the cotyledons and embryonic axes of mature seeds.

Its function is as follows. PA1b binds to basic 7S globulin (BG) and stimulates its phosphorylation activity. Involved in the signal transduction system to regulate the growth and differentiation as a hormone peptide. Toxic to various insects through binding to a high affinity binding site in the insect gut. The polypeptide is Albumin-1 C (Pisum sativum (Garden pea)).